We begin with the raw amino-acid sequence, 454 residues long: Type II methyltransferase M.MvaI (454 aa).

This sequence belongs to the N(4)/N(6)-methyltransferase family. N(4) subfamily.

The enzyme catalyses a 2'-deoxycytidine in DNA + S-adenosyl-L-methionine = an N(4)-methyl-2'-deoxycytidine in DNA + S-adenosyl-L-homocysteine + H(+). An alpha subtype methylase, recognizes the double-stranded sequence 5'-CCWGG-3', methylatES C-2 on both strands, and protects the DNA from cleavage by the MvaI endonuclease. In Kocuria varians (Micrococcus varians), this protein is Type II methyltransferase M.MvaI.